Consider the following 610-residue polypeptide: UvrABC system protein C (610 aa).

One can recognise a GIY-YIG domain in the interval Ser-16–Val-94. The UVR domain occupies Gln-204 to Val-239.

This sequence belongs to the UvrC family. As to quaternary structure, interacts with UvrB in an incision complex.

Its subcellular location is the cytoplasm. Its function is as follows. The UvrABC repair system catalyzes the recognition and processing of DNA lesions. UvrC both incises the 5' and 3' sides of the lesion. The N-terminal half is responsible for the 3' incision and the C-terminal half is responsible for the 5' incision. The chain is UvrABC system protein C from Serratia proteamaculans (strain 568).